The following is a 524-amino-acid chain: Homeobox protein engrailed-like SMOX-2 (524 aa).

Residues 194 to 218 (SSSSSSSSSSSSSSSSSSCSTNSSS) are disordered. The homeobox DNA-binding region spans 423-482 (LKRPRTSFTVPQLKRLSQEFEKNRYLDELRRKKLATELDLRESQVKIWFQNKRAKTKKAS).

It belongs to the engrailed homeobox family.

It is found in the nucleus. The sequence is that of Homeobox protein engrailed-like SMOX-2 (SMOX-2) from Schistosoma mansoni (Blood fluke).